The primary structure comprises 303 residues: Diaminopimelate epimerase (303 aa).

Substrate-binding residues include Asn15 and Asn72. Catalysis depends on Cys81, which acts as the Proton donor. Substrate-binding positions include 82 to 83, Asn169, Asn202, and 220 to 221; these read GN and ER. The active-site Proton acceptor is the Cys229. 230 to 231 contributes to the substrate binding site; it reads GT.

It belongs to the diaminopimelate epimerase family. Homodimer.

It localises to the cytoplasm. It carries out the reaction (2S,6S)-2,6-diaminopimelate = meso-2,6-diaminopimelate. The protein operates within amino-acid biosynthesis; L-lysine biosynthesis via DAP pathway; DL-2,6-diaminopimelate from LL-2,6-diaminopimelate: step 1/1. In terms of biological role, catalyzes the stereoinversion of LL-2,6-diaminopimelate (L,L-DAP) to meso-diaminopimelate (meso-DAP), a precursor of L-lysine and an essential component of the bacterial peptidoglycan. In Prochlorococcus marinus (strain MIT 9313), this protein is Diaminopimelate epimerase.